A 273-amino-acid polypeptide reads, in one-letter code: Proteasome subunit beta (273 aa).

The segment covering 1–19 (MQESTANKVAANATSSFTE) has biased composition (polar residues). A disordered region spans residues 1–23 (MQESTANKVAANATSSFTEHLQR). A propeptide spans 1-50 (MQESTANKVAANATSSFTEHLQRDRPELLPFNRSGQGSATAAAPLQVPHA) (removed in mature form; by autocatalysis). The Nucleophile role is filled by threonine 51.

The protein belongs to the peptidase T1B family. As to quaternary structure, the 20S proteasome core is composed of 14 alpha and 14 beta subunits that assemble into four stacked heptameric rings, resulting in a barrel-shaped structure. The two inner rings, each composed of seven catalytic beta subunits, are sandwiched by two outer rings, each composed of seven alpha subunits. The catalytic chamber with the active sites is on the inside of the barrel. Has a gated structure, the ends of the cylinder being occluded by the N-termini of the alpha-subunits. Is capped by the proteasome-associated ATPase, ARC.

The protein resides in the cytoplasm. The catalysed reaction is Cleavage of peptide bonds with very broad specificity.. Its pathway is protein degradation; proteasomal Pup-dependent pathway. The formation of the proteasomal ATPase ARC-20S proteasome complex, likely via the docking of the C-termini of ARC into the intersubunit pockets in the alpha-rings, may trigger opening of the gate for substrate entry. Interconversion between the open-gate and close-gate conformations leads to a dynamic regulation of the 20S proteasome proteolysis activity. Its function is as follows. Component of the proteasome core, a large protease complex with broad specificity involved in protein degradation. In Pseudarthrobacter chlorophenolicus (strain ATCC 700700 / DSM 12829 / CIP 107037 / JCM 12360 / KCTC 9906 / NCIMB 13794 / A6) (Arthrobacter chlorophenolicus), this protein is Proteasome subunit beta.